A 332-amino-acid polypeptide reads, in one-letter code: UPF0194 membrane protein YbhG (332 aa).

Positions 1–16 (MMKKPVVIGLAVVVLA) are cleaved as a signal peptide. Residues 108–209 (EEIAQAAAAV…LNLQDSTLIA (102 aa)) adopt a coiled-coil conformation.

This sequence belongs to the UPF0194 family.

It localises to the periplasm. The polypeptide is UPF0194 membrane protein YbhG (Escherichia coli O45:K1 (strain S88 / ExPEC)).